Reading from the N-terminus, the 268-residue chain is Phosphatidylglycerol--prolipoprotein diacylglyceryl transferase (268 aa).

7 helical membrane passes run 23–43 (IGLR…RWLA), 62–82 (LLFN…VFFY), 97–117 (VWEG…AMIW), 132–152 (FVAP…FINL), 179–199 (SQLY…NIFI), 206–226 (ASVA…VEYV), and 241–261 (GQAL…WAYS). Residue Arg-145 participates in a 1,2-diacyl-sn-glycero-3-phospho-(1'-sn-glycerol) binding.

Belongs to the Lgt family.

The protein localises to the cell inner membrane. It catalyses the reaction L-cysteinyl-[prolipoprotein] + a 1,2-diacyl-sn-glycero-3-phospho-(1'-sn-glycerol) = an S-1,2-diacyl-sn-glyceryl-L-cysteinyl-[prolipoprotein] + sn-glycerol 1-phosphate + H(+). It functions in the pathway protein modification; lipoprotein biosynthesis (diacylglyceryl transfer). Catalyzes the transfer of the diacylglyceryl group from phosphatidylglycerol to the sulfhydryl group of the N-terminal cysteine of a prolipoprotein, the first step in the formation of mature lipoproteins. In Haemophilus influenzae (strain 86-028NP), this protein is Phosphatidylglycerol--prolipoprotein diacylglyceryl transferase.